Consider the following 359-residue polypeptide: Insulin gene enhancer protein ISL-2 (359 aa).

2 LIM zinc-binding domains span residues 25-86 and 87-149; these read AMCV…RLFG and IKCA…LLER. A disordered region spans residues 151–190; the sequence is AAGSPRSPGPLPGARGLHLPDAGSGRQPSLRTHVHKQAEK. Phosphoserine is present on residues serine 154 and serine 157. A DNA-binding region (homeobox) is located at residues 191–250; it reads TTRVRTVLNEKQLHTLRTCYAANPRPDALMKEQLVEMTGLSPRVIRVWFQNKRCKDKKKS. Positions 272–301 are LIM-binding domain (LID); the sequence is GTPLVAGSPIRHENAVQGSAVEVQTYQPPW. The residue at position 279 (serine 279) is a Phosphoserine. A compositionally biased stretch (low complexity) spans 326–336; that stretch reads ESGSLGNSSGS. Positions 326–359 are disordered; sequence ESGSLGNSSGSDVTSLSSQLPDTPNSMVPSPVET. Residues 337-359 are compositionally biased toward polar residues; it reads DVTSLSSQLPDTPNSMVPSPVET.

Interacts with LHX4.

The protein localises to the nucleus. Its function is as follows. Transcriptional factor that defines subclasses of motoneurons that segregate into columns in the spinal cord and select distinct axon pathways. The polypeptide is Insulin gene enhancer protein ISL-2 (Isl2) (Mus musculus (Mouse)).